A 484-amino-acid chain; its full sequence is tRNA sulfurtransferase (484 aa).

The THUMP domain maps to 63–167 (REMIERLTCT…LDRLFVIHRQ (105 aa)). Residues 185–186 (LM), K267, G289, and Q298 each bind ATP. C346 and C457 are oxidised to a cystine. A Rhodanese domain is found at 405–483 (VLPGQIVIDI…GHTNVRVYRP (79 aa)). C457 acts as the Cysteine persulfide intermediate in catalysis.

It belongs to the ThiI family.

It is found in the cytoplasm. The enzyme catalyses [ThiI sulfur-carrier protein]-S-sulfanyl-L-cysteine + a uridine in tRNA + 2 reduced [2Fe-2S]-[ferredoxin] + ATP + H(+) = [ThiI sulfur-carrier protein]-L-cysteine + a 4-thiouridine in tRNA + 2 oxidized [2Fe-2S]-[ferredoxin] + AMP + diphosphate. The catalysed reaction is [ThiS sulfur-carrier protein]-C-terminal Gly-Gly-AMP + S-sulfanyl-L-cysteinyl-[cysteine desulfurase] + AH2 = [ThiS sulfur-carrier protein]-C-terminal-Gly-aminoethanethioate + L-cysteinyl-[cysteine desulfurase] + A + AMP + 2 H(+). The protein operates within cofactor biosynthesis; thiamine diphosphate biosynthesis. In terms of biological role, catalyzes the ATP-dependent transfer of a sulfur to tRNA to produce 4-thiouridine in position 8 of tRNAs, which functions as a near-UV photosensor. Also catalyzes the transfer of sulfur to the sulfur carrier protein ThiS, forming ThiS-thiocarboxylate. This is a step in the synthesis of thiazole, in the thiamine biosynthesis pathway. The sulfur is donated as persulfide by IscS. This is tRNA sulfurtransferase from Pseudomonas paraeruginosa (strain DSM 24068 / PA7) (Pseudomonas aeruginosa (strain PA7)).